Reading from the N-terminus, the 84-residue chain is Large ribosomal subunit protein bL27 (84 aa).

Residues Met1–Gly22 are disordered.

This sequence belongs to the bacterial ribosomal protein bL27 family.

The polypeptide is Large ribosomal subunit protein bL27 (Shewanella amazonensis (strain ATCC BAA-1098 / SB2B)).